A 190-amino-acid chain; its full sequence is Large ribosomal subunit protein uL6 (190 aa).

The protein belongs to the universal ribosomal protein uL6 family.

In Drosophila melanogaster (Fruit fly), this protein is Large ribosomal subunit protein uL6 (RpL9).